A 455-amino-acid polypeptide reads, in one-letter code: UPF0210 protein Teth514_2074 (455 aa).

This sequence belongs to the UPF0210 family. Homodimer.

The polypeptide is UPF0210 protein Teth514_2074 (Thermoanaerobacter sp. (strain X514)).